We begin with the raw amino-acid sequence, 737 residues long: Phosphoribosylformylglycinamidine synthase subunit PurL (737 aa).

Residue histidine 50 is part of the active site. Positions 53 and 92 each coordinate ATP. Position 94 (glutamate 94) interacts with Mg(2+). Substrate-binding positions include 95–98 (SHNH) and arginine 117. The Proton acceptor role is filled by histidine 96. Aspartate 118 lines the Mg(2+) pocket. Glutamine 241 serves as a coordination point for substrate. Mg(2+) is bound at residue aspartate 269. A substrate-binding site is contributed by 313–315 (ESQ). ATP contacts are provided by aspartate 494 and glycine 531. Asparagine 532 contributes to the Mg(2+) binding site. Residue serine 534 coordinates substrate.

It belongs to the FGAMS family. As to quaternary structure, monomer. Part of the FGAM synthase complex composed of 1 PurL, 1 PurQ and 2 PurS subunits.

It localises to the cytoplasm. It catalyses the reaction N(2)-formyl-N(1)-(5-phospho-beta-D-ribosyl)glycinamide + L-glutamine + ATP + H2O = 2-formamido-N(1)-(5-O-phospho-beta-D-ribosyl)acetamidine + L-glutamate + ADP + phosphate + H(+). It functions in the pathway purine metabolism; IMP biosynthesis via de novo pathway; 5-amino-1-(5-phospho-D-ribosyl)imidazole from N(2)-formyl-N(1)-(5-phospho-D-ribosyl)glycinamide: step 1/2. Functionally, part of the phosphoribosylformylglycinamidine synthase complex involved in the purines biosynthetic pathway. Catalyzes the ATP-dependent conversion of formylglycinamide ribonucleotide (FGAR) and glutamine to yield formylglycinamidine ribonucleotide (FGAM) and glutamate. The FGAM synthase complex is composed of three subunits. PurQ produces an ammonia molecule by converting glutamine to glutamate. PurL transfers the ammonia molecule to FGAR to form FGAM in an ATP-dependent manner. PurS interacts with PurQ and PurL and is thought to assist in the transfer of the ammonia molecule from PurQ to PurL. This Rhodopseudomonas palustris (strain BisA53) protein is Phosphoribosylformylglycinamidine synthase subunit PurL.